A 290-amino-acid polypeptide reads, in one-letter code: MSIVVARLAGGLGNQMFQYAKGYAESVERNSSLKLDLRGYKNYTLHGGFRLDKLNIDNTFVMSKKEMCIFPNFIVRAINKFPKLSLCSKRFESEQYSKKINGSMKGSVEFIGFWQNERYFLEHKEKLREIFTPININLDAKELSDVIRCTNSVSVHIRRGDYVSNVEALKIHGLCTERYYIDSIRYLKERFNNLVFFVFSDDIEWCKKYKNEIFSRSDDVKFIEGNTQEVDMWLMSNAKYHIIANSSFSWWGAWLKNYDLGITIAPTPWFEREELNSFDPCPEKWVRIEK.

It belongs to the glycosyltransferase 11 family. Does not require a metal cofactor. serves as cofactor.

The enzyme catalyses GDP-beta-L-colitose + beta-D-galactosyl-(1-&gt;3)-N-acetyl-D-glucosamine = alpha-L-colitosyl-(1-&gt;2)-beta-D-galactosyl-(1-&gt;3)-N-acetyl-D-glucosamine + GDP + H(+). It participates in bacterial outer membrane biogenesis; LPS O-antigen biosynthesis. With respect to regulation, addition of metal ions dramatically decreases the activity to 0-40%. In terms of biological role, involved in the biosynthesis of the lipopolysaccharide (LPS) O-antigen region. Catalyzes the transfer of colitose from GDP-colitose to the galactose residue of beta-Gal-(1-&gt;3)-GlcNAc (lacto-N-biose) via an alpha1,2-linkage. Is specific for beta-Gal-(1-&gt;3)-GlcNAc, but can use GDP-L-fucose as the sugar donor with almost the same efficiency as GDP-L-colitose. The protein is Alpha-1,2-colitosyltransferase of Escherichia coli.